We begin with the raw amino-acid sequence, 135 residues long: uncharacterized protein (135 aa).

This is an uncharacterized protein from Aquifex aeolicus (strain VF5).